We begin with the raw amino-acid sequence, 292 residues long: Elongation factor Ts (292 aa).

Residues 79 to 82 (TDFV) are involved in Mg(2+) ion dislocation from EF-Tu.

The protein belongs to the EF-Ts family.

It is found in the cytoplasm. Associates with the EF-Tu.GDP complex and induces the exchange of GDP to GTP. It remains bound to the aminoacyl-tRNA.EF-Tu.GTP complex up to the GTP hydrolysis stage on the ribosome. The protein is Elongation factor Ts of Staphylococcus haemolyticus (strain JCSC1435).